A 212-amino-acid chain; its full sequence is Pyridoxine/pyridoxamine 5'-phosphate oxidase (212 aa).

Substrate-binding positions include 8–11 and Lys66; that span reads RRTY. Residues 61–66, 76–77, Arg82, Lys83, and Gln105 contribute to the FMN site; these read RIVLLK and FT. 3 residues coordinate substrate: Tyr123, Arg127, and Ser131. Residues 140 to 141 and Trp184 contribute to the FMN site; that span reads QS. 190–192 is a binding site for substrate; that stretch reads RLH. Arg194 contacts FMN.

Belongs to the pyridoxamine 5'-phosphate oxidase family. As to quaternary structure, homodimer. The cofactor is FMN.

The enzyme catalyses pyridoxamine 5'-phosphate + O2 + H2O = pyridoxal 5'-phosphate + H2O2 + NH4(+). It catalyses the reaction pyridoxine 5'-phosphate + O2 = pyridoxal 5'-phosphate + H2O2. The protein operates within cofactor metabolism; pyridoxal 5'-phosphate salvage; pyridoxal 5'-phosphate from pyridoxamine 5'-phosphate: step 1/1. Its pathway is cofactor metabolism; pyridoxal 5'-phosphate salvage; pyridoxal 5'-phosphate from pyridoxine 5'-phosphate: step 1/1. In terms of biological role, catalyzes the oxidation of either pyridoxine 5'-phosphate (PNP) or pyridoxamine 5'-phosphate (PMP) into pyridoxal 5'-phosphate (PLP). The sequence is that of Pyridoxine/pyridoxamine 5'-phosphate oxidase from Cupriavidus pinatubonensis (strain JMP 134 / LMG 1197) (Cupriavidus necator (strain JMP 134)).